A 44-amino-acid polypeptide reads, in one-letter code: uncharacterized protein (44 aa).

This is an uncharacterized protein from Escherichia coli (strain K12).